Consider the following 208-residue polypeptide: F-box/kelch-repeat protein At2g43270 (208 aa).

Residues 1–44 form the F-box domain; it reads MIYVVPDLLEEIFLGLPLKSILRFKTVSKQWRSILESKSFAERR. Residues 149–200 form a Kelch repeat; the sequence is RDKFNGSYKVVRMCFSPVEKCEVLDVETGEWSELNPPPNDIDVGRKSVCVNG.

This chain is F-box/kelch-repeat protein At2g43270, found in Arabidopsis thaliana (Mouse-ear cress).